The chain runs to 197 residues: dTTP/UTP pyrophosphatase (197 aa).

Catalysis depends on Asp70, which acts as the Proton acceptor.

This sequence belongs to the Maf family. YhdE subfamily. Homodimer. Can also form homotetramers. The cofactor is a divalent metal cation.

It localises to the cytoplasm. It carries out the reaction dTTP + H2O = dTMP + diphosphate + H(+). The catalysed reaction is UTP + H2O = UMP + diphosphate + H(+). The enzyme catalyses 5-methyl-UTP + H2O = 5-methyl-UMP + diphosphate + H(+). It catalyses the reaction psi-UTP + H2O = psi-UMP + diphosphate + H(+). It carries out the reaction 5-methyl-CTP + H2O = 5-methyl-CMP + diphosphate + H(+). Nucleoside triphosphate pyrophosphatase that hydrolyzes dTTP and UTP. Can also hydrolyze TTP and the modified nucleotides 5-methyl-UTP (m(5)UTP), pseudo-UTP and 5-methyl-CTP (m(5)CTP). Has weak activity with CTP. May have a dual role in cell division arrest and in preventing the incorporation of modified nucleotides into cellular nucleic acids. Important in maintenance of cell shape. The chain is dTTP/UTP pyrophosphatase (yhdE) from Escherichia coli (strain K12).